Reading from the N-terminus, the 499-residue chain is Anaerobic nitric oxide reductase flavorubredoxin (499 aa).

The zinc metallo-hydrolase stretch occupies residues 30–210 (TKGTSYNSYL…PFSALVTAKI (181 aa)). The Fe cation site is built by His-79, Glu-81, Asp-83, His-147, Asp-166, and His-227. In terms of domain architecture, Flavodoxin-like spans 254 to 393 (ITLFYDSMSN…LCREHGQFIA (140 aa)). FMN is bound by residues 260-264 (SMSNN) and 342-369 (AFGS…ETAV). In terms of domain architecture, Rubredoxin-like spans 447–498 (KQCMLCTVCNWVYDPEIGEPNQGVEPNTAWIDVPDYFLCPECNLGKDVFVEV). The Fe cation site is built by Cys-452, Cys-455, Cys-485, and Cys-488.

This sequence in the N-terminal section; belongs to the zinc metallo-hydrolase group 3 family. Homotetramer. Fe cation serves as cofactor. FMN is required as a cofactor.

The protein resides in the cytoplasm. It participates in nitrogen metabolism; nitric oxide reduction. In terms of biological role, anaerobic nitric oxide reductase; uses NADH to detoxify nitric oxide (NO), protecting several 4Fe-4S NO-sensitive enzymes. Has at least 2 reductase partners, only one of which (NorW, flavorubredoxin reductase) has been identified. NO probably binds to the di-iron center; electrons enter from the NorW at rubredoxin and are transferred sequentially to the FMN center and the di-iron center. Also able to function as an aerobic oxygen reductase. The sequence is that of Anaerobic nitric oxide reductase flavorubredoxin from Aliivibrio salmonicida (strain LFI1238) (Vibrio salmonicida (strain LFI1238)).